A 1407-amino-acid polypeptide reads, in one-letter code: ABC transporter B family member 6 (1407 aa).

Positions 18–65 are disordered; that stretch reads LTPVSEVSEPPESPSPYLDPGAEHGGTGTAAQADDEEEMEEPEEMEPP. The segment covering 50–63 has biased composition (acidic residues); sequence ADDEEEMEEPEEME. A run of 4 helical transmembrane segments spans residues 84 to 104, 139 to 159, 212 to 231, and 236 to 258; these read VLMV…IVYL, IVYI…CWIL, VGNY…IGFV, and IALI…NIFL. Positions 86 to 379 constitute an ABC transmembrane type-1 1 domain; the sequence is MVFGSVAAAA…AATNFYSFDQ (294 aa). A glycan (N-linked (GlcNAc...) asparagine) is linked at Asn-291. The next 2 helical transmembrane spans lie at 310-330 and 351-371; these read GILI…LAIC and GEII…NQAA. One can recognise an ABC transporter 1 domain in the interval 412–647; sequence IEFRNVYFSY…GNLYAELLKC (236 aa). 447-454 lines the ATP pocket; it reads GRNGSGKS. Residues Asn-449 and Asn-663 are each glycosylated (N-linked (GlcNAc...) asparagine). Disordered regions lie at residues 670 to 696 and 709 to 815; these read AERD…SLQR and NSEE…DGQH. Residue Asn-727 is glycosylated (N-linked (GlcNAc...) asparagine). Basic and acidic residues predominate over residues 733-755; the sequence is VGEKEPTIKRQDSFEMRLPELPK. Over residues 761–770 the composition is skewed to polar residues; sequence PQRQKSNGSD. Asn-767 carries an N-linked (GlcNAc...) asparagine glycan. Residues 835–1123 form the ABC transmembrane type-1 2 domain; the sequence is AVLGSIGAAI…PFGLAPYILK (289 aa). 6 consecutive transmembrane segments (helical) span residues 840-860, 880-900, 958-978, 982-1002, 1061-1081, and 1102-1122; these read IGAA…ALVV, LIIA…HFYF, IFIQ…LLGW, LVAL…KLWL, IGFA…LLLW, and MVFS…PYIL. An ABC transporter 2 domain is found at 1158–1395; that stretch reads IELKNIDFCY…NGLYVRLMQP (238 aa). Residue Asn-1178 is glycosylated (N-linked (GlcNAc...) asparagine). 1193 to 1200 contacts ATP; the sequence is GVSGSGKS. Residues Asn-1260 and Asn-1346 are each glycosylated (N-linked (GlcNAc...) asparagine).

Belongs to the ABC transporter superfamily. ABCB family. Multidrug resistance exporter (TC 3.A.1.201) subfamily. In terms of tissue distribution, expressed in aerial tissues.

The protein localises to the membrane. The enzyme catalyses (indol-3-yl)acetate(in) + ATP + H2O = (indol-3-yl)acetate(out) + ADP + phosphate + H(+). Its function is as follows. Probable auxin efflux transporter that contributes, together with ABCB20 and in a FKBP42/TWD1-dependent manner, to the regulation of leaf position and morphology, internode distribution, roots development, and inflorescence organization, probably by modulating auxin repartition. This chain is ABC transporter B family member 6, found in Arabidopsis thaliana (Mouse-ear cress).